Here is a 429-residue protein sequence, read N- to C-terminus: L-cysteine:1D-myo-inositol 2-amino-2-deoxy-alpha-D-glucopyranoside ligase (429 aa).

Zn(2+) is bound at residue C60. L-cysteinyl-5'-AMP-binding positions include 60–63, T75, and 98–100; these read CGIT and NIT. Positions 62–72 match the 'HIGH' region motif; that stretch reads ITPYDATHLGH. The short motif at 204 to 209 is the 'ERGGDP' region element; that stretch reads ERGGDP. Position 244 (W244) interacts with L-cysteinyl-5'-AMP. Zn(2+) is bound at residue C248. 266-268 contacts L-cysteinyl-5'-AMP; the sequence is GSD. H273 provides a ligand contact to Zn(2+). I300 provides a ligand contact to L-cysteinyl-5'-AMP. The 'KMSKS' region motif lies at 306-310; sequence KMSKS.

It belongs to the class-I aminoacyl-tRNA synthetase family. MshC subfamily. Monomer. The cofactor is Zn(2+).

It catalyses the reaction 1D-myo-inositol 2-amino-2-deoxy-alpha-D-glucopyranoside + L-cysteine + ATP = 1D-myo-inositol 2-(L-cysteinylamino)-2-deoxy-alpha-D-glucopyranoside + AMP + diphosphate + H(+). Catalyzes the ATP-dependent condensation of GlcN-Ins and L-cysteine to form L-Cys-GlcN-Ins. The sequence is that of L-cysteine:1D-myo-inositol 2-amino-2-deoxy-alpha-D-glucopyranoside ligase from Mycolicibacterium vanbaalenii (strain DSM 7251 / JCM 13017 / BCRC 16820 / KCTC 9966 / NRRL B-24157 / PYR-1) (Mycobacterium vanbaalenii).